The chain runs to 435 residues: Type A flavoprotein fprA (435 aa).

A zinc metallo-hydrolase region spans residues 48 to 228 (ANGTTYNAYA…PFRSFVAQAL (181 aa)). Residues histidine 98, glutamate 100, aspartate 102, histidine 167, aspartate 186, and histidine 243 each contribute to the Fe cation site. One can recognise a Flavodoxin-like domain in the interval 276–415 (LLIFYVSAYG…EGRAFGRRLA (140 aa)).

In the N-terminal section; belongs to the zinc metallo-hydrolase group 3 family. In terms of assembly, homodimer. It depends on FMN as a cofactor. The cofactor is Fe cation.

In terms of biological role, low-potential electron donor to a number of redox enzymes. In Rhodobacter capsulatus (strain ATCC BAA-309 / NBRC 16581 / SB1003), this protein is Type A flavoprotein fprA (fprA).